The chain runs to 312 residues: MITEVFFRNFYRNYAKFDVVSVERREFAFQPFGGGMVRHKSFNSVDELRRYIVEKTPKHIYHSVAYYERPGEEDMDRKGWLGADLVFDIDGDHLNTEACKGSAVVSLRCLEDAKEETNKLIDILVRELDLRPTRIVFSGNRGFHIHITSEEVLKLGTKERREVVNFIKGVGFDPSRFEVKLGRRRVKLYEEEPVGSLLRVRQAVENPDTLRVEIDEVVTQDIHRLIRLPGSLNGKTGLVAMPLELKDLERGVENIVERAIAFRKGNLKFRFEKPLIGEVLFEKIEARAGDLKILPAHVAIYLELQEFGKIYD.

Residues D88, D90, and D215 contribute to the active site.

This sequence belongs to the eukaryotic-type primase small subunit family. As to quaternary structure, heterodimer of a small subunit (PriS) and a large subunit (PriL). The cofactor is Mg(2+). Mn(2+) serves as cofactor.

Functionally, catalytic subunit of DNA primase, an RNA polymerase that catalyzes the synthesis of short RNA molecules used as primers for DNA polymerase during DNA replication. The small subunit contains the primase catalytic core and has DNA synthesis activity on its own. Binding to the large subunit stabilizes and modulates the activity, increasing the rate of DNA synthesis while decreasing the length of the DNA fragments, and conferring RNA synthesis capability. The DNA polymerase activity may enable DNA primase to also catalyze primer extension after primer synthesis. May also play a role in DNA repair. The protein is DNA primase small subunit PriS of Pyrobaculum arsenaticum (strain DSM 13514 / JCM 11321 / PZ6).